The primary structure comprises 283 residues: Pantothenate synthetase (283 aa).

Residue 30–37 participates in ATP binding; it reads MGYLHDGH. The Proton donor role is filled by His37. Gln61 serves as a coordination point for (R)-pantoate. Gln61 is a beta-alanine binding site. 147–150 lines the ATP pocket; sequence GKKD. Gln153 lines the (R)-pantoate pocket. ATP-binding positions include Ile176 and 184-187; that span reads MSSR.

The protein belongs to the pantothenate synthetase family. As to quaternary structure, homodimer.

It localises to the cytoplasm. The catalysed reaction is (R)-pantoate + beta-alanine + ATP = (R)-pantothenate + AMP + diphosphate + H(+). Its pathway is cofactor biosynthesis; (R)-pantothenate biosynthesis; (R)-pantothenate from (R)-pantoate and beta-alanine: step 1/1. Functionally, catalyzes the condensation of pantoate with beta-alanine in an ATP-dependent reaction via a pantoyl-adenylate intermediate. The chain is Pantothenate synthetase from Geobacter sulfurreducens (strain ATCC 51573 / DSM 12127 / PCA).